A 327-amino-acid chain; its full sequence is Phosphate acyltransferase (327 aa).

The protein belongs to the PlsX family. Homodimer. Probably interacts with PlsY.

The protein resides in the cytoplasm. The enzyme catalyses a fatty acyl-[ACP] + phosphate = an acyl phosphate + holo-[ACP]. It functions in the pathway lipid metabolism; phospholipid metabolism. Catalyzes the reversible formation of acyl-phosphate (acyl-PO(4)) from acyl-[acyl-carrier-protein] (acyl-ACP). This enzyme utilizes acyl-ACP as fatty acyl donor, but not acyl-CoA. In Thermotoga neapolitana (strain ATCC 49049 / DSM 4359 / NBRC 107923 / NS-E), this protein is Phosphate acyltransferase.